We begin with the raw amino-acid sequence, 110 residues long: Class I hydrophobin 2 (110 aa).

Residues 1 to 19 (MFARAASVFVLSLPILATA) form the signal peptide. Intrachain disulfides connect Cys29-Cys89, Cys36-Cys83, Cys37-Cys70, and Cys90-Cys103.

The protein belongs to the fungal hydrophobin family. In terms of assembly, self-assembles to form functional amyloid fibrils called rodlets. Self-assembly into fibrillar rodlets occurs spontaneously at hydrophobic:hydrophilic interfaces and the rodlets further associate laterally to form amphipathic monolayers.

It localises to the secreted. The protein localises to the cell wall. Functionally, aerial growth, conidiation, and dispersal of filamentous fungi in the environment rely upon a capability of their secreting small amphipathic proteins called hydrophobins (HPBs) with low sequence identity. Class I can self-assemble into an outermost layer of rodlet bundles on aerial cell surfaces, conferring cellular hydrophobicity that supports fungal growth, development and dispersal; whereas Class II form highly ordered films at water-air interfaces through intermolecular interactions but contribute nothing to the rodlet structure. Pnh2 is a class I hydrophobin that might be involved in the attachment of the hydrophilic wall of hyphae to the hydrophobic surface of wood under inorganic phosphate (Pi)-deficient conditions and enable the mycelium to degrade efficiently the components of wood and to acquire nutrients containing Pi. This Pholiota nameko protein is Class I hydrophobin 2.